The following is a 293-amino-acid chain: ESX-3 secretion-associated protein EspG3 (293 aa).

This sequence belongs to the EspG family.

The protein resides in the cytoplasm. The chain is ESX-3 secretion-associated protein EspG3 from Mycolicibacterium smegmatis (strain ATCC 700084 / mc(2)155) (Mycobacterium smegmatis).